The sequence spans 1072 residues: Rho family-interacting cell polarization regulator 2 (1072 aa).

The stretch at 83-112 (NGLDEYLEVHQTELDKLTAQLKDMRRNSRL) forms a coiled coil. The segment at 173–470 (RESLTEINRS…ATTATQHRAR (298 aa)) is necessary for interaction with NCAM and myoblast protrusion formation. Disordered regions lie at residues 439 to 465 (DRVP…TTAT) and 683 to 718 (EVEK…AGSP). Polar residues predominate over residues 447–460 (AEPSSAHVTSSPDI). Positions 683–698 (EVEKNSYRTEHPEARG) are enriched in basic and acidic residues.

It belongs to the RIPOR family. Homooligomer; homooligomerization is regulated by RHOC and leads to the formation of concatemers through the association of N- and C-termini. Interacts with NCAM; this interaction is necessary for myoblast protrusion formation. Expressed in myoblast and myotubes (at protein level). Expressed in brain, eyes and skeletal muscle.

It localises to the cytoplasm. The protein localises to the cytoskeleton. It is found in the cell projection. The protein resides in the filopodium. Its subcellular location is the apical cell membrane. It localises to the stereocilium. The protein localises to the stereocilium membrane. Functionally, acts as an inhibitor of the small GTPase RHOA and plays several roles in the regulation of myoblast and hair cell differentiation, lymphocyte T proliferation and neutrophil polarization. Plays a role in fetal mononuclear myoblast differentiation by promoting filopodia and myotube formation. Maintains naive T lymphocytes in a quiescent state and prevents chemokine-induced T lymphocyte responses, such as cell adhesion, polarization and migration. Involved also in the regulation of neutrophil polarization, chemotaxis and adhesion. Required for normal development of inner and outer hair cell stereocilia within the cochlea of the inner ear. Plays a role for maintaining the structural organization of the basal domain of stereocilia. Involved in mechanosensory hair cell function. Required for normal hearing. This chain is Rho family-interacting cell polarization regulator 2, found in Coturnix japonica (Japanese quail).